Reading from the N-terminus, the 145-residue chain is 3-hydroxyacyl-[acyl-carrier-protein] dehydratase FabZ (145 aa).

Histidine 49 is an active-site residue.

This sequence belongs to the thioester dehydratase family. FabZ subfamily.

It localises to the cytoplasm. The catalysed reaction is a (3R)-hydroxyacyl-[ACP] = a (2E)-enoyl-[ACP] + H2O. Its function is as follows. Involved in unsaturated fatty acids biosynthesis. Catalyzes the dehydration of short chain beta-hydroxyacyl-ACPs and long chain saturated and unsaturated beta-hydroxyacyl-ACPs. This is 3-hydroxyacyl-[acyl-carrier-protein] dehydratase FabZ from Rickettsia peacockii (strain Rustic).